We begin with the raw amino-acid sequence, 209 residues long: GTP cyclohydrolase-2 (209 aa).

Position 49-53 (49-53 (RIHSE)) interacts with GTP. Zn(2+) contacts are provided by cysteine 54, cysteine 65, and cysteine 67. Residues glutamine 70, 92–94 (EGR), and threonine 114 each bind GTP. The Proton acceptor role is filled by aspartate 126. The active-site Nucleophile is the arginine 128. Positions 149 and 154 each coordinate GTP.

Belongs to the GTP cyclohydrolase II family. It depends on Zn(2+) as a cofactor.

The catalysed reaction is GTP + 4 H2O = 2,5-diamino-6-hydroxy-4-(5-phosphoribosylamino)-pyrimidine + formate + 2 phosphate + 3 H(+). It functions in the pathway cofactor biosynthesis; riboflavin biosynthesis; 5-amino-6-(D-ribitylamino)uracil from GTP: step 1/4. Catalyzes the conversion of GTP to 2,5-diamino-6-ribosylamino-4(3H)-pyrimidinone 5'-phosphate (DARP), formate and pyrophosphate. The chain is GTP cyclohydrolase-2 from Shewanella pealeana (strain ATCC 700345 / ANG-SQ1).